Here is a 139-residue protein sequence, read N- to C-terminus: uncharacterized protein (139 aa).

This is an uncharacterized protein from Halalkalibacterium halodurans (strain ATCC BAA-125 / DSM 18197 / FERM 7344 / JCM 9153 / C-125) (Bacillus halodurans).